Reading from the N-terminus, the 409-residue chain is Putative competence-damage inducible protein (409 aa).

It belongs to the CinA family.

The sequence is that of Putative competence-damage inducible protein from Clostridium tetani (strain Massachusetts / E88).